Reading from the N-terminus, the 198-residue chain is MEDQETKRITKKPSRSIIISLKDIPPLDPSSIPSMKPMAQDHHNVGMQRFQEKTDFKFEEEDNAISSFSNIQIDPNSTRSISLEKKLAPKPDEEHTTTTKPISKDDESKTRRGSAKSVLHEMCASKRWRPPVYECCNVDGPCHLRLFTYKVMVEIRDSSGKTVLECFGDPRRKKKAAAEHAAEGALWYLEHVKTKPHQ.

Basic and acidic residues predominate over residues 85–110 (KKLAPKPDEEHTTTTKPISKDDESKT). The tract at residues 85–115 (KKLAPKPDEEHTTTTKPISKDDESKTRRGSA) is disordered. In terms of domain architecture, DRBM spans 114 to 191 (SAKSVLHEMC…AEGALWYLEH (78 aa)).

This Arabidopsis thaliana (Mouse-ear cress) protein is Ribonuclease 3-like protein 1 (RTL1).